The primary structure comprises 493 residues: Cytochrome P450 2E1 (493 aa).

298 to 303 (FAGTET) provides a ligand contact to substrate. Residue C437 participates in heme binding.

Belongs to the cytochrome P450 family. Interacts with chaperones HSP70 and HSP90; this interaction is required for initial targeting to mitochondria. Heme serves as cofactor.

Its subcellular location is the endoplasmic reticulum membrane. The protein resides in the microsome membrane. The protein localises to the mitochondrion inner membrane. It carries out the reaction an organic molecule + reduced [NADPH--hemoprotein reductase] + O2 = an alcohol + oxidized [NADPH--hemoprotein reductase] + H2O + H(+). The enzyme catalyses (5Z,8Z,11Z)-eicosatrienoate + reduced [NADPH--hemoprotein reductase] + O2 = 19-hydroxy-(5Z,8Z,11Z)-eicosatrienoate + oxidized [NADPH--hemoprotein reductase] + H2O + H(+). The catalysed reaction is (5Z,8Z,11Z,14Z,17Z)-eicosapentaenoate + reduced [NADPH--hemoprotein reductase] + O2 = 19-hydroxy-(5Z,8Z,11Z,14Z,17Z)-eicosapentaenoate + oxidized [NADPH--hemoprotein reductase] + H2O + H(+). It catalyses the reaction (4Z,7Z,10Z,13Z,16Z,19Z)-docosahexaenoate + reduced [NADPH--hemoprotein reductase] + O2 = 21-hydroxy-(4Z,7Z,10Z,13Z,16Z,19Z)-docosahexaenoate + oxidized [NADPH--hemoprotein reductase] + H2O + H(+). It carries out the reaction dodecanoate + reduced [NADPH--hemoprotein reductase] + O2 = 11-hydroxydodecanoate + oxidized [NADPH--hemoprotein reductase] + H2O + H(+). The enzyme catalyses tetradecanoate + reduced [NADPH--hemoprotein reductase] + O2 = 13-hydroxytetradecanoate + oxidized [NADPH--hemoprotein reductase] + H2O + H(+). The catalysed reaction is 4-nitrophenol + NADPH + O2 + H(+) = 4-nitrocatechol + NADP(+) + H2O. The protein operates within lipid metabolism; fatty acid metabolism. The omega-1 hydroxylase activity is stimulated by cytochrome b5. Functionally, a cytochrome P450 monooxygenase involved in the metabolism of fatty acids. Mechanistically, uses molecular oxygen inserting one oxygen atom into a substrate, and reducing the second into a water molecule, with two electrons provided by NADPH via cytochrome P450 reductase (NADPH--hemoprotein reductase). Catalyzes the hydroxylation of carbon-hydrogen bonds. Hydroxylates fatty acids specifically at the omega-1 position displaying the highest catalytic activity for saturated fatty acids. May be involved in the oxidative metabolism of xenobiotics. This Macaca mulatta (Rhesus macaque) protein is Cytochrome P450 2E1 (CYP2E1).